We begin with the raw amino-acid sequence, 54 residues long: MSINIVHSNENNEENTNIENWTTTGTNYRNECIARCGRLFSGFNALICMKPCGV.

This is an uncharacterized protein from Dictyostelium discoideum (Social amoeba).